The primary structure comprises 363 residues: NAD(P)H-quinone oxidoreductase subunit 1, chloroplastic (363 aa).

6 helical membrane passes run 28–48 (WVFVPILIFIVGITISVLAIV), 98–118 (FSFGPAISVISIILSYSVIPF), 129–149 (IGVFLWIAISSIAPIGLLMSG), 253–273 (FGLFYVASYLNLLVSSLFVTV), 300–320 (VFVTIIGIFITLVKTFLFIFV), and 336–356 (LLNLGWKFLLPISLGNLLLTT).

The protein belongs to the complex I subunit 1 family. NDH is composed of at least 16 different subunits, 5 of which are encoded in the nucleus.

It localises to the plastid. Its subcellular location is the chloroplast thylakoid membrane. It catalyses the reaction a plastoquinone + NADH + (n+1) H(+)(in) = a plastoquinol + NAD(+) + n H(+)(out). The enzyme catalyses a plastoquinone + NADPH + (n+1) H(+)(in) = a plastoquinol + NADP(+) + n H(+)(out). Functionally, NDH shuttles electrons from NAD(P)H:plastoquinone, via FMN and iron-sulfur (Fe-S) centers, to quinones in the photosynthetic chain and possibly in a chloroplast respiratory chain. The immediate electron acceptor for the enzyme in this species is believed to be plastoquinone. Couples the redox reaction to proton translocation, and thus conserves the redox energy in a proton gradient. This Phaseolus vulgaris (Kidney bean) protein is NAD(P)H-quinone oxidoreductase subunit 1, chloroplastic.